Here is a 338-residue protein sequence, read N- to C-terminus: Probable protein S-acyltransferase 1 (338 aa).

2 helical membrane-spanning segments follow: residues 32–52 (DASS…AFSI) and 68–88 (LTLI…FLTS). The 51-residue stretch at 142-192 (KFCDTCQLYRPPRAFHCSICNNCVQRFDHHCPWVGQCIALRNYPFFVCFLS) folds into the DHHC domain. Residue C172 is the S-palmitoyl cysteine intermediate of the active site. A run of 2 helical transmembrane segments spans residues 186 to 206 (FFVC…VFSW) and 225 to 245 (ILGV…GLTV). Residues 319–338 (FGPKDTKMSSGKSDSEARER) are disordered. The span at 320–338 (GPKDTKMSSGKSDSEARER) shows a compositional bias: basic and acidic residues.

The protein belongs to the DHHC palmitoyltransferase family.

It localises to the endosome membrane. The catalysed reaction is L-cysteinyl-[protein] + hexadecanoyl-CoA = S-hexadecanoyl-L-cysteinyl-[protein] + CoA. In terms of biological role, palmitoyl acyltransferase. This Arabidopsis thaliana (Mouse-ear cress) protein is Probable protein S-acyltransferase 1 (PAT01).